The chain runs to 427 residues: Extracellular superoxide dismutase [Cu-Zn] 2 (427 aa).

Positions 1 to 20 (MNKLIISLLIVLSAISIISA) are cleaved as a signal peptide. The Extracellular segment spans residues 21 to 406 (DYQYGYCKFG…PTETSQPGTS (386 aa)). 5 N-linked (GlcNAc...) asparagine glycosylation sites follow: asparagine 38, asparagine 57, asparagine 81, asparagine 190, and asparagine 218. Histidine 257, histidine 259, and histidine 275 together coordinate Cu cation. Residues histidine 275 and histidine 283 each contribute to the Zn(2+) site. N-linked (GlcNAc...) asparagine glycosylation occurs at asparagine 288. Zn(2+)-binding residues include histidine 292 and aspartate 295. A Cu cation-binding site is contributed by histidine 331. N-linked (GlcNAc...) asparagine glycosylation is present at asparagine 376. The interval 381 to 404 (GESTIEPSPTPSTTPTPTETSQPG) is disordered. Positions 395–404 (PTPTETSQPG) are enriched in low complexity. Residues 407 to 426 (SYLAPFFVLILSSLISVILI) traverse the membrane as a helical segment. Position 427 (leucine 427) is a topological domain, cytoplasmic.

This sequence belongs to the Cu-Zn superoxide dismutase family. Cu cation is required as a cofactor. It depends on Zn(2+) as a cofactor.

The protein resides in the cell membrane. It catalyses the reaction 2 superoxide + 2 H(+) = H2O2 + O2. Protect the extracellular space from toxic effect of reactive oxygen intermediates by converting superoxyde radicals into hydrogen peroxyde and oxygen. The chain is Extracellular superoxide dismutase [Cu-Zn] 2 (sodB) from Dictyostelium discoideum (Social amoeba).